A 311-amino-acid chain; its full sequence is MKTRIFIGSSKEGLEIAEYIKLQLGTKYECYLWTDDIFKFNESFLYTLLKEASLFDFGILVATKDDLSTIRDKSFDTPRDNVIFEFGLFLGRLGPSRAFVIQESGAKLPTDLLGITVPQFEKTIPLANSTSLNNEIERISKTIDEKITLGELGLLPSTVLAIGYFYNFVSIVCESIHTKSDIKVDDAIFKKFELNIVIPKDLDADIKKRATVYFKSKTLKEIQFETSSRNFPVFVTYDNQSKDVLKLYDMPTTLGGIDKAIEMFMRKGHIGKTSQQKLLEERELRNFQTTLQNLIDNDAFCRNIVKIIQEE.

Positions 4 to 121 (RIFIGSSKEG…LLGITVPQFE (118 aa)) constitute a TIR domain. Residues 157–311 (STVLAIGYFY…RNIVKIIQEE (155 aa)) are STING domain. 3',3'-c-di-GMP is bound by residues phenylalanine 168, proline 232, and aspartate 249.

The protein in the C-terminal section; belongs to the bacterial STING family. In terms of assembly, forms homodimers; in the presence of c-di-GMP forms filaments with an ordered array of parallel-stacked subunits.

It carries out the reaction NAD(+) + H2O = ADP-D-ribose + nicotinamide + H(+). NAD(+) hydrolase activity is strongly stimulated by c-di-GMP, weakly by 3'3'-cGAMP, very weakly by c-di-AMP but not at all by 2'3'-cGAMP. Self-association of TIR domains is required for NADase activity. Effector protein of a CBASS antiviral system with NAD(+) hydrolase activity. CBASS (cyclic oligonucleotide-based antiphage signaling system) provides immunity against bacteriophage. The CD-NTase protein synthesizes cyclic nucleotides in response to infection; these serve as specific second messenger signals. The signals activate a diverse range of effectors, leading to bacterial cell death and thus abortive phage infection. A type I-D CBASS(GG) system. In terms of biological role, binds c-di-GMP, does not bind cUMP-AMP. Upon activation by c-di-GMP forms filaments which hydrolyze NAD(+); filament formation is required for enzyme activation. The sequence is that of CD-NTase-associated protein 12 from Flavobacterium daejeonense.